Consider the following 147-residue polypeptide: Large ribosomal subunit protein uL13 (147 aa).

This sequence belongs to the universal ribosomal protein uL13 family. As to quaternary structure, part of the 50S ribosomal subunit.

Functionally, this protein is one of the early assembly proteins of the 50S ribosomal subunit, although it is not seen to bind rRNA by itself. It is important during the early stages of 50S assembly. The polypeptide is Large ribosomal subunit protein uL13 (Mycolicibacterium paratuberculosis (strain ATCC BAA-968 / K-10) (Mycobacterium paratuberculosis)).